Consider the following 366-residue polypeptide: RNA 3'-terminal phosphate cyclase (366 aa).

ATP contacts are provided by Gln104, Pro131, Tyr294, Asp297, Gln298, and His320. His320 functions as the Tele-AMP-histidine intermediate in the catalytic mechanism.

This sequence belongs to the RNA 3'-terminal cyclase family. Type 1 subfamily. In terms of tissue distribution, detected in retinal ganglion cells (RGCs) (at protein level).

It is found in the nucleus. It localises to the nucleoplasm. The enzyme catalyses a 3'-end 3'-phospho-ribonucleotide-RNA + ATP = a 3'-end 2',3'-cyclophospho-ribonucleotide-RNA + AMP + diphosphate. Its function is as follows. Catalyzes the conversion of 3'-phosphate to a 2',3'-cyclic phosphodiester at the end of RNA. The mechanism of action of the enzyme occurs in 3 steps: (A) adenylation of the enzyme by ATP; (B) transfer of adenylate to an RNA-N3'P to produce RNA-N3'PP5'A; (C) and attack of the adjacent 2'-hydroxyl on the 3'-phosphorus in the diester linkage to produce the cyclic end product. Likely functions in some aspects of cellular RNA processing. Function plays an important role in regulating axon regeneration by inhibiting central nervous system (CNS) axon regeneration following optic nerve injury. This is RNA 3'-terminal phosphate cyclase from Mus musculus (Mouse).